The primary structure comprises 111 residues: Thioredoxin 2 (111 aa).

Positions 2-109 (SKGVITITDA…LLSFLDTHLN (108 aa)) constitute a Thioredoxin domain. An intrachain disulfide couples Cys33 to Cys36.

This sequence belongs to the thioredoxin family.

Participates in various redox reactions through the reversible oxidation of its active center dithiol to a disulfide and catalyzes dithiol-disulfide exchange reactions. This Nostoc sp. (strain PCC 7120 / SAG 25.82 / UTEX 2576) protein is Thioredoxin 2 (trxB).